Reading from the N-terminus, the 230-residue chain is Cytochrome c oxidase subunit 2 (230 aa).

Over 1–14 the chain is Mitochondrial intermembrane; it reads MAHPSQLGFQDAAS. The helical transmembrane segment at 15–45 threads the bilayer; it reads PVMEELIHFHDHTLMIVFLISTLVLYIITAM. Residues 46 to 59 are Mitochondrial matrix-facing; that stretch reads VSTKLTNKYILDSQ. A helical membrane pass occupies residues 60–87; it reads EIEIVWTILPAIILIMIALPSLRILYLM. The Mitochondrial intermembrane portion of the chain corresponds to 88–230; it reads DEINDPHLTI…TWSSLMLEEA (143 aa). Cu cation contacts are provided by H161, C196, E198, C200, H204, and M207. E198 contacts Mg(2+).

The protein belongs to the cytochrome c oxidase subunit 2 family. Component of the cytochrome c oxidase (complex IV, CIV), a multisubunit enzyme composed of 14 subunits. The complex is composed of a catalytic core of 3 subunits MT-CO1, MT-CO2 and MT-CO3, encoded in the mitochondrial DNA, and 11 supernumerary subunits COX4I, COX5A, COX5B, COX6A, COX6B, COX6C, COX7A, COX7B, COX7C, COX8 and NDUFA4, which are encoded in the nuclear genome. The complex exists as a monomer or a dimer and forms supercomplexes (SCs) in the inner mitochondrial membrane with NADH-ubiquinone oxidoreductase (complex I, CI) and ubiquinol-cytochrome c oxidoreductase (cytochrome b-c1 complex, complex III, CIII), resulting in different assemblies (supercomplex SCI(1)III(2)IV(1) and megacomplex MCI(2)III(2)IV(2)). Found in a complex with TMEM177, COA6, COX18, COX20, SCO1 and SCO2. Interacts with TMEM177 in a COX20-dependent manner. Interacts with COX20. Interacts with COX16. The cofactor is Cu cation.

The protein resides in the mitochondrion inner membrane. It catalyses the reaction 4 Fe(II)-[cytochrome c] + O2 + 8 H(+)(in) = 4 Fe(III)-[cytochrome c] + 2 H2O + 4 H(+)(out). Its function is as follows. Component of the cytochrome c oxidase, the last enzyme in the mitochondrial electron transport chain which drives oxidative phosphorylation. The respiratory chain contains 3 multisubunit complexes succinate dehydrogenase (complex II, CII), ubiquinol-cytochrome c oxidoreductase (cytochrome b-c1 complex, complex III, CIII) and cytochrome c oxidase (complex IV, CIV), that cooperate to transfer electrons derived from NADH and succinate to molecular oxygen, creating an electrochemical gradient over the inner membrane that drives transmembrane transport and the ATP synthase. Cytochrome c oxidase is the component of the respiratory chain that catalyzes the reduction of oxygen to water. Electrons originating from reduced cytochrome c in the intermembrane space (IMS) are transferred via the dinuclear copper A center (CU(A)) of subunit 2 and heme A of subunit 1 to the active site in subunit 1, a binuclear center (BNC) formed by heme A3 and copper B (CU(B)). The BNC reduces molecular oxygen to 2 water molecules using 4 electrons from cytochrome c in the IMS and 4 protons from the mitochondrial matrix. The polypeptide is Cytochrome c oxidase subunit 2 (MT-CO2) (Scyliorhinus canicula (Small-spotted catshark)).